A 53-amino-acid chain; its full sequence is UPF0391 membrane protein YtjA (53 aa).

Helical transmembrane passes span Trp-4–Ala-24 and Ala-30–Met-48.

Belongs to the UPF0391 family.

The protein localises to the cell membrane. The polypeptide is UPF0391 membrane protein YtjA (Escherichia coli O6:K15:H31 (strain 536 / UPEC)).